Consider the following 547-residue polypeptide: Chaperonin GroEL (547 aa).

ATP contacts are provided by residues 30–33 (TLGP), lysine 51, 87–91 (DGTTT), glycine 415, and aspartate 496.

It belongs to the chaperonin (HSP60) family. As to quaternary structure, forms a cylinder of 14 subunits composed of two heptameric rings stacked back-to-back. Interacts with the co-chaperonin GroES.

Its subcellular location is the cytoplasm. It catalyses the reaction ATP + H2O + a folded polypeptide = ADP + phosphate + an unfolded polypeptide.. In terms of biological role, together with its co-chaperonin GroES, plays an essential role in assisting protein folding. The GroEL-GroES system forms a nano-cage that allows encapsulation of the non-native substrate proteins and provides a physical environment optimized to promote and accelerate protein folding. The sequence is that of Chaperonin GroEL from Mannheimia succiniciproducens (strain KCTC 0769BP / MBEL55E).